The sequence spans 319 residues: Ninja-family protein Os07g0602900 (319 aa).

Disordered stretches follow at residues 1–26, 69–152, and 181–234; these read MAAS…EKGG, LPGG…DAMY, and AEAM…LTMR. Over residues 70-79 the composition is skewed to gly residues; sequence PGGGGGGAGG. Positions 105–118 are enriched in basic and acidic residues; sequence ERWRRREMQSLKRL. Residues 185 to 196 show a composition bias toward polar residues; that stretch reads DTSSSDNASCQN. A compositionally biased stretch (low complexity) spans 225-234; the sequence is LRTLRSLTMR.

This sequence belongs to the Ninja family.

The protein resides in the nucleus. The polypeptide is Ninja-family protein Os07g0602900 (Oryza sativa subsp. japonica (Rice)).